The sequence spans 193 residues: dTTP/UTP pyrophosphatase (193 aa).

Asp71 acts as the Proton acceptor in catalysis.

The protein belongs to the Maf family. YhdE subfamily. It depends on a divalent metal cation as a cofactor.

It localises to the cytoplasm. It carries out the reaction dTTP + H2O = dTMP + diphosphate + H(+). The enzyme catalyses UTP + H2O = UMP + diphosphate + H(+). Functionally, nucleoside triphosphate pyrophosphatase that hydrolyzes dTTP and UTP. May have a dual role in cell division arrest and in preventing the incorporation of modified nucleotides into cellular nucleic acids. The polypeptide is dTTP/UTP pyrophosphatase (Citrifermentans bemidjiense (strain ATCC BAA-1014 / DSM 16622 / JCM 12645 / Bem) (Geobacter bemidjiensis)).